Here is a 273-residue protein sequence, read N- to C-terminus: NAD-dependent protein deacylase (273 aa).

The Deacetylase sirtuin-type domain occupies 20–272 (RERLRQRIFF…PEFVEKLLEG (253 aa)). Residue 48–67 (GAGISAESGIRTFRAADGLW) participates in NAD(+) binding. Positions 92 and 95 each coordinate substrate. 129 to 132 (QNID) lines the NAD(+) pocket. Residue histidine 147 is the Proton acceptor of the active site. Positions 155 and 174 each coordinate Zn(2+). Residues 214-216 (GTS), 240-242 (NLE), and alanine 258 contribute to the NAD(+) site.

Belongs to the sirtuin family. Class III subfamily. It depends on Zn(2+) as a cofactor.

Its subcellular location is the cytoplasm. It carries out the reaction N(6)-acetyl-L-lysyl-[protein] + NAD(+) + H2O = 2''-O-acetyl-ADP-D-ribose + nicotinamide + L-lysyl-[protein]. The enzyme catalyses N(6)-succinyl-L-lysyl-[protein] + NAD(+) + H2O = 2''-O-succinyl-ADP-D-ribose + nicotinamide + L-lysyl-[protein]. It catalyses the reaction N(6)-(2-hydroxyisobutanoyl)-L-lysyl-[protein] + NAD(+) + H2O = 2''-O-(2-hydroxyisobutanoyl)-ADP-D-ribose + nicotinamide + L-lysyl-[protein]. Functionally, NAD-dependent lysine deacetylase that specifically removes acetyl groups on target proteins. Also acts as a protein-lysine deacylase by mediating protein desuccinylation and de-2-hydroxyisobutyrylation. Modulates the activities of several proteins which are inactive in their acylated form. This is NAD-dependent protein deacylase from Shigella flexneri.